We begin with the raw amino-acid sequence, 207 residues long: Coiled-coil domain-containing protein 25 (207 aa).

Over 1–104 the chain is Extracellular; that stretch reads MVFYFTSAVV…SNLKKTADMD (104 aa). The interval 20–24 is DNA-binding; it reads KDKYE. A helical transmembrane segment spans residues 105 to 121; sequence IGQIGFHRQKEVKIVAV. Positions 112–189 form a coiled coil; sequence RQKEVKIVAV…EDLKNYTSLM (78 aa). Residues 122–207 are Cytoplasmic-facing; the sequence is EKKINEIVNR…EDGYDSDDFM (86 aa). The span at 140–183 shows a compositional bias: basic and acidic residues; it reads YPDLAAEKESRDREERNEKKAQIQEQKKKEKEEVKKKKEMEDLK. A disordered region spans residues 140 to 207; that stretch reads YPDLAAEKES…EDGYDSDDFM (68 aa). Residues 184–198 show a composition bias toward polar residues; sequence NYTSLMKSDNMTTNE. Ser-203 carries the post-translational modification Phosphoserine.

Belongs to the CCDC25 family. As to quaternary structure, interacts (via cytoplasmic region) with ILK.

Its subcellular location is the cell membrane. The protein resides in the endomembrane system. Transmembrane receptor that senses neutrophil extracellular traps (NETs) and triggers the ILK-PARVB pathway to enhance cell motility. NETs are mainly composed of DNA fibers and are released by neutrophils to bind pathogens during inflammation. Specifically binds NETs on its extracellular region, in particular the 8-OHdG-enriched DNA present in NETs, and recruits ILK, initiating the ILK-PARVB cascade to induce cytoskeleton rearrangement and directional migration of cells. In Danio rerio (Zebrafish), this protein is Coiled-coil domain-containing protein 25.